The sequence spans 668 residues: Threonine--tRNA ligase (668 aa).

Residues 1 to 64 (MSQSVSLTFP…TDGKIEIITR (64 aa)) form the TGS domain. Positions 245–553 (DHRKLGREMD…LIENFAGHMP (309 aa)) are catalytic. Positions 347, 398, and 530 each coordinate Zn(2+).

This sequence belongs to the class-II aminoacyl-tRNA synthetase family. As to quaternary structure, homodimer. Zn(2+) serves as cofactor.

The protein resides in the cytoplasm. It catalyses the reaction tRNA(Thr) + L-threonine + ATP = L-threonyl-tRNA(Thr) + AMP + diphosphate + H(+). Functionally, catalyzes the attachment of threonine to tRNA(Thr) in a two-step reaction: L-threonine is first activated by ATP to form Thr-AMP and then transferred to the acceptor end of tRNA(Thr). Also edits incorrectly charged L-seryl-tRNA(Thr). In Rhizobium etli (strain ATCC 51251 / DSM 11541 / JCM 21823 / NBRC 15573 / CFN 42), this protein is Threonine--tRNA ligase.